Here is a 321-residue protein sequence, read N- to C-terminus: Methionyl-tRNA formyltransferase (321 aa).

Position 111–114 (111–114) interacts with (6S)-5,6,7,8-tetrahydrofolate; it reads SLLP.

The protein belongs to the Fmt family.

It carries out the reaction L-methionyl-tRNA(fMet) + (6R)-10-formyltetrahydrofolate = N-formyl-L-methionyl-tRNA(fMet) + (6S)-5,6,7,8-tetrahydrofolate + H(+). In terms of biological role, attaches a formyl group to the free amino group of methionyl-tRNA(fMet). The formyl group appears to play a dual role in the initiator identity of N-formylmethionyl-tRNA by promoting its recognition by IF2 and preventing the misappropriation of this tRNA by the elongation apparatus. This Bifidobacterium animalis subsp. lactis (strain AD011) protein is Methionyl-tRNA formyltransferase.